The chain runs to 589 residues: MDGEAVRFCTDNQCVSLHPQEVDSVAMAPAAPKIPRLVQATPAFMAVTLVFSLVTLFVVVQQQTRPVPKPVQAVILGDNITGHLPFEPNNHHHFGREAEMRELIQTFKGHMENSSAWVVEIQMLKCRVDNVNSQLQVLGDHLGNTNADIQMVKGVLKDATTLSLQTQMLRSSLEGTNAEIQRLKEDLEKADALTFQTLNFLKSSLENTSIELHVLSRGLENANSEIQMLNASLETANTQAQLANSSLKNANAEIYVLRGHLDSVNDLRTQNQVLRNSLEGANAEIQGLKENLQNTNALNSQTQAFIKSSFDNTSAEIQFLRGHLERAGDEIHVLKRDLKMVTAQTQKANGRLDQTDTQIQVFKSEMENVNTLNAQIQVLNGHMKNASREIQTLKQGMKNASALTSQTQMLDSNLQKASAEIQRLRGDLENTKALTMEIQQEQSRLKTLHVVITSQEQLQRTQSQLLQMVLQGWKFNGGSLYYFSSVKKSWHEAEQFCVSQGAHLASVASKEEQAFLVEFTSKVYYWIGLTDRGTEGSWRWTDGTPFNAAQNKAPGSKGSCPLRKYIIVNSGMGACSFIDTPPCPWILSN.

The Cytoplasmic portion of the chain corresponds to 1–39 (MDGEAVRFCTDNQCVSLHPQEVDSVAMAPAAPKIPRLVQ). A helical; Signal-anchor for type II membrane protein membrane pass occupies residues 40–60 (ATPAFMAVTLVFSLVTLFVVV). Over 61 to 589 (QQQTRPVPKP…TPPCPWILSN (529 aa)) the chain is Extracellular. N-linked (GlcNAc...) asparagine glycosylation is found at asparagine 79, asparagine 113, asparagine 207, asparagine 230, asparagine 244, asparagine 312, asparagine 385, and asparagine 399. In terms of domain architecture, C-type lectin spans 476–589 (NGGSLYYFSS…TPPCPWILSN (114 aa)).

The protein localises to the membrane. Receptor with an affinity for galactose and fucose. Could be involved in endocytosis. The sequence is that of C-type lectin domain family 4 member F (CLEC4F) from Homo sapiens (Human).